Here is a 527-residue protein sequence, read N- to C-terminus: MEMDMDIIRKAIAATIFALVMAWAWRVLDWAWFTPKRIEKRLRQQGFRGNPYRFLVGDVKESGKMHQEALSNPMEFDNDIVPRLMPHINHTIKTYGRNSFTWMGRIPRIHVMEPELIKEVLTHSSKYQKNFDVHNPLVKFLLTGVGSFEGAKWSKHRRIISPAFTLEKLKSMLPAFAICYHDMLTKWEKLAEKEGSHEVDIFPTFDVLTSDVISKVAFGSTYDEGGKIFRLLKELMDLTIDCMRDVYIPGWSYLPTKRNKRMKEINKEITDMLRFIINKRMKALKAGEPGEDDLLGVLLESNIQEIQKQGNRKDGGMTINDVIEECKLFYFAGQETTGVLLTWTTILLSKHPEWQERAREEVLQAFGKNKPEFERLNHLKYVSMILYEVLRLYPPVIDLTKIIHEDTKLGPYTIPAGTQVMLPTVMLHREKSIWGEDAMEFNPMRFADGVANATKNNVTYLPFSWGPRVCLGQNFALLQAKLGLAMILQRFKFDVAPSYVHAPFTILTVQPQFGSHVIYKKLERQNF.

Residues 1 to 11 (MEMDMDIIRKA) lie on the Lumenal side of the membrane. The chain crosses the membrane as a helical span at residues 12–32 (IAATIFALVMAWAWRVLDWAW). At 33–527 (FTPKRIEKRL…IYKKLERQNF (495 aa)) the chain is on the cytoplasmic side. Heme is bound at residue Cys470.

It belongs to the cytochrome P450 family. Requires heme as cofactor. In terms of tissue distribution, expressed in leaves (especially in leaf epidermis), and, to a lower extent, in roots, stems, flower buds and flowers.

The protein localises to the endoplasmic reticulum membrane. It carries out the reaction loganin + reduced [NADPH--hemoprotein reductase] + O2 = secologanin + oxidized [NADPH--hemoprotein reductase] + 2 H2O + H(+). The enzyme catalyses secologanin + reduced [NADPH--hemoprotein reductase] + O2 = secoxyloganin + oxidized [NADPH--hemoprotein reductase] + H2O + 2 H(+). The protein operates within alkaloid biosynthesis. In terms of biological role, component of the seco-iridoid and derivatives monoterpenoid indole alkaloids (MIAs, e.g. secologanin) biosynthesis pathway. Catalyzes the conversion of loganin into secologanin. Catalyzes the conversion of secologanin into secoxyloganin. This is Secologanin synthase 2 from Catharanthus roseus (Madagascar periwinkle).